Reading from the N-terminus, the 178-residue chain is Nicotinamide-nucleotide adenylyltransferase (178 aa).

This sequence belongs to the archaeal NMN adenylyltransferase family.

The protein localises to the cytoplasm. The enzyme catalyses beta-nicotinamide D-ribonucleotide + ATP + H(+) = diphosphate + NAD(+). It participates in cofactor biosynthesis; NAD(+) biosynthesis; NAD(+) from nicotinamide D-ribonucleotide: step 1/1. The polypeptide is Nicotinamide-nucleotide adenylyltransferase (Pyrobaculum aerophilum (strain ATCC 51768 / DSM 7523 / JCM 9630 / CIP 104966 / NBRC 100827 / IM2)).